We begin with the raw amino-acid sequence, 202 residues long: Outer-membrane lipoprotein carrier protein (202 aa).

The signal sequence occupies residues 1–18; sequence MNKLFLILLLIFSHEVFS.

The protein belongs to the LolA family. Monomer.

Its subcellular location is the periplasm. Participates in the translocation of lipoproteins from the inner membrane to the outer membrane. Only forms a complex with a lipoprotein if the residue after the N-terminal Cys is not an aspartate (The Asp acts as a targeting signal to indicate that the lipoprotein should stay in the inner membrane). This is Outer-membrane lipoprotein carrier protein from Legionella pneumophila (strain Corby).